The chain runs to 473 residues: Arginine biosynthesis bifunctional protein ArgJ, mitochondrial (473 aa).

Substrate-binding residues include threonine 201, lysine 230, threonine 241, glutamate 328, asparagine 468, and threonine 473. The active-site Nucleophile is threonine 241.

This sequence belongs to the ArgJ family. Heterodimer of an alpha and a beta chain. The alpha and beta chains are autoproteolytically processed from a single precursor protein within the mitochondrion.

Its subcellular location is the mitochondrion matrix. It catalyses the reaction N(2)-acetyl-L-ornithine + L-glutamate = N-acetyl-L-glutamate + L-ornithine. It carries out the reaction L-glutamate + acetyl-CoA = N-acetyl-L-glutamate + CoA + H(+). Its pathway is amino-acid biosynthesis; L-arginine biosynthesis; L-ornithine and N-acetyl-L-glutamate from L-glutamate and N(2)-acetyl-L-ornithine (cyclic): step 1/1. It functions in the pathway amino-acid biosynthesis; L-arginine biosynthesis; N(2)-acetyl-L-ornithine from L-glutamate: step 1/4. Its function is as follows. Catalyzes two activities which are involved in the cyclic version of arginine biosynthesis: the synthesis of acetylglutamate from glutamate and acetyl-CoA, and of ornithine by transacetylation between acetylornithine and glutamate. This chain is Arginine biosynthesis bifunctional protein ArgJ, mitochondrial, found in Ajellomyces capsulatus (strain H143) (Darling's disease fungus).